The chain runs to 129 residues: Large ribosomal subunit protein bL17 (129 aa).

Belongs to the bacterial ribosomal protein bL17 family. In terms of assembly, part of the 50S ribosomal subunit. Contacts protein L32.

The polypeptide is Large ribosomal subunit protein bL17 (Hahella chejuensis (strain KCTC 2396)).